Consider the following 365-residue polypeptide: tRNA 2-selenouridine synthase (365 aa).

Positions 16–138 constitute a Rhodanese domain; that stretch reads FLLKTPLIDL…LRRYLINVID (123 aa). Cys98 functions as the S-selanylcysteine intermediate in the catalytic mechanism.

It belongs to the SelU family. In terms of assembly, monomer.

The catalysed reaction is 5-methylaminomethyl-2-thiouridine(34) in tRNA + selenophosphate + (2E)-geranyl diphosphate + H2O + H(+) = 5-methylaminomethyl-2-selenouridine(34) in tRNA + (2E)-thiogeraniol + phosphate + diphosphate. It carries out the reaction 5-methylaminomethyl-2-thiouridine(34) in tRNA + (2E)-geranyl diphosphate = 5-methylaminomethyl-S-(2E)-geranyl-thiouridine(34) in tRNA + diphosphate. It catalyses the reaction 5-methylaminomethyl-S-(2E)-geranyl-thiouridine(34) in tRNA + selenophosphate + H(+) = 5-methylaminomethyl-2-(Se-phospho)selenouridine(34) in tRNA + (2E)-thiogeraniol. The enzyme catalyses 5-methylaminomethyl-2-(Se-phospho)selenouridine(34) in tRNA + H2O = 5-methylaminomethyl-2-selenouridine(34) in tRNA + phosphate. Involved in the post-transcriptional modification of the uridine at the wobble position (U34) of tRNA(Lys), tRNA(Glu) and tRNA(Gln). Catalyzes the conversion of 2-thiouridine (S2U-RNA) to 2-selenouridine (Se2U-RNA). Acts in a two-step process involving geranylation of 2-thiouridine (S2U) to S-geranyl-2-thiouridine (geS2U) and subsequent selenation of the latter derivative to 2-selenouridine (Se2U) in the tRNA chain. This chain is tRNA 2-selenouridine synthase, found in Psychromonas ingrahamii (strain DSM 17664 / CCUG 51855 / 37).